Reading from the N-terminus, the 419-residue chain is Ubiquitin-like modifier-activating enzyme 5 (419 aa).

Residues 18–47 (NRLGNVKKDHPLESSSNSKPTHQPKSPAPY) form a disordered region. Polar residues predominate over residues 30 to 41 (ESSSNSKPTHQP). ATP is bound by residues Gly-94, Asp-115, Lys-138, Asn-161, and Asn-194. Positions 236 and 239 each coordinate Zn(2+). Cys-260 acts as the Glycyl thioester intermediate in catalysis. Positions 313 and 318 each coordinate Zn(2+).

This sequence belongs to the ubiquitin-activating E1 family. UBA5 subfamily. In terms of assembly, interacts with ufc-1. In terms of tissue distribution, expressed in the intestine.

Functionally, E1-like enzyme which activates ufm-1. Required for interaction between ufm-1 and ufc-1. The sequence is that of Ubiquitin-like modifier-activating enzyme 5 from Caenorhabditis elegans.